Consider the following 852-residue polypeptide: DNA mismatch repair protein MutS (852 aa).

Position 615–622 (615–622) interacts with ATP; it reads GPNMAGKS.

Belongs to the DNA mismatch repair MutS family.

Functionally, this protein is involved in the repair of mismatches in DNA. It is possible that it carries out the mismatch recognition step. This protein has a weak ATPase activity. The chain is DNA mismatch repair protein MutS from Thermodesulfovibrio yellowstonii (strain ATCC 51303 / DSM 11347 / YP87).